Consider the following 133-residue polypeptide: MAKAANTAAQRARKKVRKNVADGIAHVHASFNNTIITITDRQGNALSWATSGGQGFKGSRKSTPFAAQVAAESAGRVAQDQGIKNLEVRIKGPGPGRESAVRALNNLGIKIQVIEDVTPVPHNGCRPPKRRRI.

The protein belongs to the universal ribosomal protein uS11 family. Part of the 30S ribosomal subunit. Interacts with proteins S7 and S18. Binds to IF-3.

In terms of biological role, located on the platform of the 30S subunit, it bridges several disparate RNA helices of the 16S rRNA. Forms part of the Shine-Dalgarno cleft in the 70S ribosome. The chain is Small ribosomal subunit protein uS11 from Ralstonia nicotianae (strain ATCC BAA-1114 / GMI1000) (Ralstonia solanacearum).